The following is a 370-amino-acid chain: Histidinol-phosphate aminotransferase 3 (370 aa).

K229 is modified (N6-(pyridoxal phosphate)lysine).

Belongs to the class-II pyridoxal-phosphate-dependent aminotransferase family. Histidinol-phosphate aminotransferase subfamily. Homodimer. Pyridoxal 5'-phosphate serves as cofactor.

It carries out the reaction L-histidinol phosphate + 2-oxoglutarate = 3-(imidazol-4-yl)-2-oxopropyl phosphate + L-glutamate. The protein operates within amino-acid biosynthesis; L-histidine biosynthesis; L-histidine from 5-phospho-alpha-D-ribose 1-diphosphate: step 7/9. The protein is Histidinol-phosphate aminotransferase 3 (hisC3) of Rhizobium meliloti (strain 1021) (Ensifer meliloti).